Consider the following 241-residue polypeptide: MAKIHMVLQGKGGVGKSAIAAIIAQYKMDKGQTPLCIDTDPVNATFEGYKALNVRRLNIMAGDEINSRNFDTLVELIAPTKDDVVIDNGASSFVPLSHYLISNQVPALLQEMGHELVIHTVVTGGQALLDTVSGFAQLASQFPAEALFVVWLNPYWGPIEHEGKSFEQMKAYTANKARVSSIIQIPALKEETYGRDFSDMLQERLTFDQALADESLTIMTRQRLKIVRRGLFEQLDAAAVL.

It to plasmid R751 TraL.

This Escherichia coli protein is Protein TraL (traL).